The primary structure comprises 134 residues: Small ribosomal subunit protein uS11 (134 aa).

This sequence belongs to the universal ribosomal protein uS11 family. Part of the 30S ribosomal subunit. Interacts with proteins S7 and S18. Binds to IF-3.

In terms of biological role, located on the platform of the 30S subunit, it bridges several disparate RNA helices of the 16S rRNA. Forms part of the Shine-Dalgarno cleft in the 70S ribosome. This is Small ribosomal subunit protein uS11 from Parafrankia sp. (strain EAN1pec).